The sequence spans 274 residues: Large ribosomal subunit protein uL2 (274 aa).

Disordered stretches follow at residues 28–59 and 222–274; these read APYA…GGHK and GAAM…RRTK. The segment covering 39-49 has biased composition (polar residues); that stretch reads KSGGRNNNGRI. Basic and acidic residues predominate over residues 229–239; sequence DHPHGGGEGRS.

This sequence belongs to the universal ribosomal protein uL2 family. Part of the 50S ribosomal subunit. Forms a bridge to the 30S subunit in the 70S ribosome.

Functionally, one of the primary rRNA binding proteins. Required for association of the 30S and 50S subunits to form the 70S ribosome, for tRNA binding and peptide bond formation. It has been suggested to have peptidyltransferase activity; this is somewhat controversial. Makes several contacts with the 16S rRNA in the 70S ribosome. This is Large ribosomal subunit protein uL2 from Marinomonas sp. (strain MWYL1).